The primary structure comprises 250 residues: 2,3-bisphosphoglycerate-dependent phosphoglycerate mutase (250 aa).

Substrate contacts are provided by residues 10–17 (RHGESQWN), 23–24 (TG), R62, 89–92 (ERHY), K100, 116–117 (RR), and 185–186 (GN). H11 serves as the catalytic Tele-phosphohistidine intermediate. The Proton donor/acceptor role is filled by E89.

Belongs to the phosphoglycerate mutase family. BPG-dependent PGAM subfamily. As to quaternary structure, homodimer.

It catalyses the reaction (2R)-2-phosphoglycerate = (2R)-3-phosphoglycerate. The protein operates within carbohydrate degradation; glycolysis; pyruvate from D-glyceraldehyde 3-phosphate: step 3/5. Catalyzes the interconversion of 2-phosphoglycerate and 3-phosphoglycerate. The chain is 2,3-bisphosphoglycerate-dependent phosphoglycerate mutase from Citrobacter koseri (strain ATCC BAA-895 / CDC 4225-83 / SGSC4696).